Reading from the N-terminus, the 404-residue chain is MAQQGKVEPQDQDSFLDDQPGIRPIPSFDDMPLHQNLLRGIYSHGFEKPSSIQQRAIVPFTRGGDIIAQAQSGTGKTGAFSIGLLQRLDFRHNVLQGLVLSPTRELALQTAEVITRIGEFLAEGNSSFCATFVGGTRVQDDYRKLQAGSIVAVGTPGRVVDVTKRGAMRTEHLRVLVLDEADEMLSQGFAEQIYEIFRYLPKEIQVALFSATMPDDVLELTKKFMRDPTRILVKRESLTLEGIKQYFIAVEEEHKLDTLMDLYETVSIAQSVIFANTRRKVDWLAQQLNQSNHTVSCMHSEMPKQDREKVMSTFRNGSSRVLVTTDLVARGIDVHHVNIVINFDLPTNKESYLHRIGRGGRYGRKGVAINFVTQKDVEVLREIESHYHTQIDELPVDFAAYLGE.

The tract at residues 1-28 (MAQQGKVEPQDQDSFLDDQPGIRPIPSF) is disordered. Positions 26–54 (PSFDDMPLHQNLLRGIYSHGFEKPSSIQQ) match the Q motif motif. Residues 57–231 (IVPFTRGGDI…KKFMRDPTRI (175 aa)) form the Helicase ATP-binding domain. 70-77 (AQSGTGKT) contacts ATP. The DEAD box motif lies at 179–182 (DEAD). The 161-residue stretch at 242 to 402 (GIKQYFIAVE…ELPVDFAAYL (161 aa)) folds into the Helicase C-terminal domain.

Belongs to the DEAD box helicase family. eIF4A subfamily. As to quaternary structure, eIF4F is a multi-subunit complex, the composition of which varies with external and internal environmental conditions. It is composed of at least EIF4A, EIF4E and EIF4G.

It carries out the reaction ATP + H2O = ADP + phosphate + H(+). Functionally, ATP-dependent RNA helicase which is a subunit of the eIF4F complex involved in cap recognition and is required for mRNA binding to ribosome. In the current model of translation initiation, eIF4A unwinds RNA secondary structures in the 5'-UTR of mRNAs which is necessary to allow efficient binding of the small ribosomal subunit, and subsequent scanning for the initiator codon. The sequence is that of Probable eukaryotic initiation factor 4A from Trypanosoma cruzi (strain CL Brener).